A 188-amino-acid polypeptide reads, in one-letter code: Threonylcarbamoyl-AMP synthase (188 aa).

Positions 3–188 (QLHPSEIKDL…RSGKILRNGQ (186 aa)) constitute a YrdC-like domain.

The protein belongs to the SUA5 family. TsaC subfamily.

The protein resides in the cytoplasm. It catalyses the reaction L-threonine + hydrogencarbonate + ATP = L-threonylcarbamoyladenylate + diphosphate + H2O. In terms of biological role, required for the formation of a threonylcarbamoyl group on adenosine at position 37 (t(6)A37) in tRNAs that read codons beginning with adenine. Catalyzes the conversion of L-threonine, HCO(3)(-)/CO(2) and ATP to give threonylcarbamoyl-AMP (TC-AMP) as the acyladenylate intermediate, with the release of diphosphate. The protein is Threonylcarbamoyl-AMP synthase of Shewanella sp. (strain ANA-3).